We begin with the raw amino-acid sequence, 468 residues long: ATP synthase subunit beta (468 aa).

155–162 (GGAGVGKT) lines the ATP pocket.

This sequence belongs to the ATPase alpha/beta chains family. As to quaternary structure, F-type ATPases have 2 components, CF(1) - the catalytic core - and CF(0) - the membrane proton channel. CF(1) has five subunits: alpha(3), beta(3), gamma(1), delta(1), epsilon(1). CF(0) has three main subunits: a(1), b(2) and c(9-12). The alpha and beta chains form an alternating ring which encloses part of the gamma chain. CF(1) is attached to CF(0) by a central stalk formed by the gamma and epsilon chains, while a peripheral stalk is formed by the delta and b chains.

It localises to the cell membrane. It catalyses the reaction ATP + H2O + 4 H(+)(in) = ADP + phosphate + 5 H(+)(out). In terms of biological role, produces ATP from ADP in the presence of a proton gradient across the membrane. The catalytic sites are hosted primarily by the beta subunits. This Streptococcus pyogenes serotype M6 (strain ATCC BAA-946 / MGAS10394) protein is ATP synthase subunit beta.